Consider the following 73-residue polypeptide: Large ribosomal subunit protein bL31 (73 aa).

It belongs to the bacterial ribosomal protein bL31 family. Type A subfamily. As to quaternary structure, part of the 50S ribosomal subunit.

Its function is as follows. Binds the 23S rRNA. The polypeptide is Large ribosomal subunit protein bL31 (Brucella abortus (strain 2308)).